The primary structure comprises 282 residues: Pantothenate synthetase (282 aa).

Residue 30-37 participates in ATP binding; the sequence is MGALHRGH. His37 (proton donor) is an active-site residue. Gln61 serves as a coordination point for (R)-pantoate. Gln61 lines the beta-alanine pocket. An ATP-binding site is contributed by 147-150; that stretch reads GEKD. Gln153 serves as a coordination point for (R)-pantoate. 184–187 provides a ligand contact to ATP; that stretch reads LSSR.

This sequence belongs to the pantothenate synthetase family. As to quaternary structure, homodimer.

Its subcellular location is the cytoplasm. It carries out the reaction (R)-pantoate + beta-alanine + ATP = (R)-pantothenate + AMP + diphosphate + H(+). Its pathway is cofactor biosynthesis; (R)-pantothenate biosynthesis; (R)-pantothenate from (R)-pantoate and beta-alanine: step 1/1. In terms of biological role, catalyzes the condensation of pantoate with beta-alanine in an ATP-dependent reaction via a pantoyl-adenylate intermediate. This is Pantothenate synthetase from Rhizorhabdus wittichii (strain DSM 6014 / CCUG 31198 / JCM 15750 / NBRC 105917 / EY 4224 / RW1) (Sphingomonas wittichii).